A 319-amino-acid chain; its full sequence is Cytochrome c biogenesis protein CcsA (319 aa).

The next 7 helical transmembrane spans lie at 9–29 (ILTH…LITL), 44–64 (GVIG…AYSG), 71–91 (LYES…FPYF), 143–163 (MVLG…LLVI), 225–245 (IISL…VWAN), 259–273 (TWAF…IYLH), and 286–306 (AIVA…VNLL).

It belongs to the CcmF/CycK/Ccl1/NrfE/CcsA family. As to quaternary structure, may interact with Ccs1.

Its subcellular location is the plastid. It is found in the chloroplast thylakoid membrane. In terms of biological role, required during biogenesis of c-type cytochromes (cytochrome c6 and cytochrome f) at the step of heme attachment. The chain is Cytochrome c biogenesis protein CcsA from Oenothera glazioviana (Large-flowered evening primrose).